We begin with the raw amino-acid sequence, 486 residues long: Probable peptidoglycan glycosyltransferase FtsW (486 aa).

Residues 1–50 (MAGAARDRAFLDHFGGAGADRPCHVEGALMNDMSRQATRLDAIGGRYDPW) lie on the Cytoplasmic side of the membrane. A helical transmembrane segment spans residues 51-71 (LLGAAVTLASLGVVMVASSSI). The Periplasmic segment spans residues 72–77 (ELEASP). The chain crosses the membrane as a helical span at residues 78–98 (FYYLTRHLLFLGGGIALAFWA). Topologically, residues 99–112 (MRTELKTIEQHNQM) are cytoplasmic. The chain crosses the membrane as a helical span at residues 113–133 (LLLACFVLLVVVFVPGLGSTV). At 134–141 (NGAKRWIN) the chain is on the periplasmic side. The helical transmembrane segment at 142-162 (LGVSRFQVVESVKVFYIIWLA) threads the bilayer. Topologically, residues 163–174 (SYLVRFRDEVNA) are cytoplasmic. Residues 175-195 (TWQAMLKPVFVVGLLVGLLLL) form a helical membrane-spanning segment. Residues 196 to 199 (QPDF) lie on the Periplasmic side of the membrane. The helical transmembrane segment at 200-220 (GSSMLLLSVTACMLVLGGAPI) threads the bilayer. Residues 221–222 (GR) lie on the Cytoplasmic side of the membrane. Residues 223–243 (IILPILLLLPALVALVIFEPY) traverse the membrane as a helical segment. The Periplasmic portion of the chain corresponds to 244–298 (RMRRVTSFMDPWVDQLGSGYQLSNALMAIGRGQWTGVGLGASVQKLNYLPESHTD). The helical transmembrane segment at 299–319 (FIFSVIAEELGFVGVCGVIGL) threads the bilayer. The Cytoplasmic portion of the chain corresponds to 320 to 342 (YALLVGRAFWLGMRCVEMKRHFS). The helical transmembrane segment at 343 to 363 (GYIAFGIGLWIAMQSFVSIGV) threads the bilayer. The Periplasmic segment spans residues 364–374 (NLGILPTKGLT). A helical membrane pass occupies residues 375–395 (LPLISSGGSSVLMTCLAMGVL). Residues 396–486 (LRVSYEADRA…RVEPTFGRIA (91 aa)) lie on the Cytoplasmic side of the membrane.

This sequence belongs to the SEDS family. FtsW subfamily.

The protein localises to the cell inner membrane. It carries out the reaction [GlcNAc-(1-&gt;4)-Mur2Ac(oyl-L-Ala-gamma-D-Glu-L-Lys-D-Ala-D-Ala)](n)-di-trans,octa-cis-undecaprenyl diphosphate + beta-D-GlcNAc-(1-&gt;4)-Mur2Ac(oyl-L-Ala-gamma-D-Glu-L-Lys-D-Ala-D-Ala)-di-trans,octa-cis-undecaprenyl diphosphate = [GlcNAc-(1-&gt;4)-Mur2Ac(oyl-L-Ala-gamma-D-Glu-L-Lys-D-Ala-D-Ala)](n+1)-di-trans,octa-cis-undecaprenyl diphosphate + di-trans,octa-cis-undecaprenyl diphosphate + H(+). The protein operates within cell wall biogenesis; peptidoglycan biosynthesis. Peptidoglycan polymerase that is essential for cell division. The protein is Probable peptidoglycan glycosyltransferase FtsW of Xanthomonas oryzae pv. oryzae (strain KACC10331 / KXO85).